The primary structure comprises 356 residues: DNA polymerase IV (356 aa).

The region spanning 6 to 187 is the UmuC domain; sequence IIHIDMDYFF…LDIGDFPGVG (182 aa). Residues Asp10 and Asp105 each coordinate Mg(2+). The active site involves Glu106.

It belongs to the DNA polymerase type-Y family. In terms of assembly, monomer. Requires Mg(2+) as cofactor.

It is found in the cytoplasm. It carries out the reaction DNA(n) + a 2'-deoxyribonucleoside 5'-triphosphate = DNA(n+1) + diphosphate. Poorly processive, error-prone DNA polymerase involved in untargeted mutagenesis. Copies undamaged DNA at stalled replication forks, which arise in vivo from mismatched or misaligned primer ends. These misaligned primers can be extended by PolIV. Exhibits no 3'-5' exonuclease (proofreading) activity. May be involved in translesional synthesis, in conjunction with the beta clamp from PolIII. This Staphylococcus aureus (strain MRSA252) protein is DNA polymerase IV.